The following is a 202-amino-acid chain: 7-cyano-7-deazaguanine synthase 1 (202 aa).

Position 7–17 (7–17 (MSGGLDSSSAA)) interacts with ATP. Residues cysteine 166, cysteine 174, cysteine 177, and cysteine 180 each coordinate Zn(2+).

The protein belongs to the QueC family. Requires Zn(2+) as cofactor.

The enzyme catalyses 7-carboxy-7-deazaguanine + NH4(+) + ATP = 7-cyano-7-deazaguanine + ADP + phosphate + H2O + H(+). It functions in the pathway purine metabolism; 7-cyano-7-deazaguanine biosynthesis. Functionally, catalyzes the ATP-dependent conversion of 7-carboxy-7-deazaguanine (CDG) to 7-cyano-7-deazaguanine (preQ(0)). This chain is 7-cyano-7-deazaguanine synthase 1 (queC1), found in Sulfurisphaera tokodaii (strain DSM 16993 / JCM 10545 / NBRC 100140 / 7) (Sulfolobus tokodaii).